The chain runs to 216 residues: LexA repressor 1 (216 aa).

A DNA-binding region (H-T-H motif) is located at residues 38–58 (TRQIGAAVGLRSMSSVARHLR). Catalysis depends on for autocatalytic cleavage activity residues S140 and K177.

The protein belongs to the peptidase S24 family. In terms of assembly, homodimer.

The enzyme catalyses Hydrolysis of Ala-|-Gly bond in repressor LexA.. In terms of biological role, represses a number of genes involved in the response to DNA damage (SOS response), including recA and lexA. In the presence of single-stranded DNA, RecA interacts with LexA causing an autocatalytic cleavage which disrupts the DNA-binding part of LexA, leading to derepression of the SOS regulon and eventually DNA repair. The sequence is that of LexA repressor 1 from Nocardia farcinica (strain IFM 10152).